Consider the following 213-residue polypeptide: Phospho-2-dehydro-3-deoxyheptonate aldolase, Tyr-sensitive (213 aa).

This sequence belongs to the class-I DAHP synthase family.

The enzyme catalyses D-erythrose 4-phosphate + phosphoenolpyruvate + H2O = 7-phospho-2-dehydro-3-deoxy-D-arabino-heptonate + phosphate. It participates in metabolic intermediate biosynthesis; chorismate biosynthesis; chorismate from D-erythrose 4-phosphate and phosphoenolpyruvate: step 1/7. Its function is as follows. Stereospecific condensation of phosphoenolpyruvate (PEP) and D-erythrose-4-phosphate (E4P) giving rise to 3-deoxy-D-arabino-heptulosonate-7-phosphate (DAHP). The sequence is that of Phospho-2-dehydro-3-deoxyheptonate aldolase, Tyr-sensitive (aroF) from Enterobacter agglomerans (Erwinia herbicola).